The primary structure comprises 371 residues: Opsin, ultraviolet-sensitive (371 aa).

The Extracellular portion of the chain corresponds to 1-52; that stretch reads MSNDSIHWEARYLPAGPPRLLGWNVPAEELIHIPEHWLVYPEPNPSLHYLLA. Residue asparagine 3 is glycosylated (N-linked (GlcNAc...) asparagine). A helical membrane pass occupies residues 53 to 73; it reads LLYILFTFLALLGNGLVIWIF. The Cytoplasmic segment spans residues 74–84; sequence CAAKSLRTPSN. Residues 85-105 form a helical membrane-spanning segment; it reads MFVVNLAICDFFMMIKTPIFI. Residues 106 to 121 lie on the Extracellular side of the membrane; the sequence is YNSFNTGFALGNLGCQ. A disulfide bridge links cysteine 120 with cysteine 197. A helical membrane pass occupies residues 122–142; it reads IFAVIGSLTGIGAAITNAAIA. The Cytoplasmic portion of the chain corresponds to 143 to 161; it reads YDRYSTIARPLDGKLSRGQ. A helical membrane pass occupies residues 162 to 182; sequence VILFIVLIWTYTIPWALMPVM. Residues 183–209 are Extracellular-facing; that stretch reads GVWGRFVPEGFLTSCSFDYLTDTNEIR. A helical membrane pass occupies residues 210-230; it reads IFVATIFTFSYCIPMILIIYY. The Cytoplasmic segment spans residues 231–278; sequence YSQIVSHVVNHEKALREQAKKMNVDSLRSNANTSSQSAEIRIAKAAIT. Residues 279–299 form a helical membrane-spanning segment; it reads ICFLYVLSWTPYGVMSMIGAF. Residues 300–302 are Extracellular-facing; it reads GNK. A helical transmembrane segment spans residues 303–323; that stretch reads ALLTPGVTMIPACTCKAVACL. The residue at position 318 (lysine 318) is an N6-(retinylidene)lysine. The Cytoplasmic portion of the chain corresponds to 324–371; sequence DPYVYAISHPKYRLELQKRLPWLELQEKPISDSTSTTTETVNTPPASS.

The protein belongs to the G-protein coupled receptor 1 family. Opsin subfamily. Post-translationally, phosphorylated on some or all of the serine and threonine residues present in the C-terminal region. Expressed in the dorsal region of the retina.

The protein localises to the membrane. In terms of biological role, visual pigments are the light-absorbing molecules that mediate vision. They consist of an apoprotein, opsin, covalently linked to 11-cis-retinal. In Apis mellifera (Honeybee), this protein is Opsin, ultraviolet-sensitive (UVOP).